A 340-amino-acid chain; its full sequence is UDP-N-acetylenolpyruvoylglucosamine reductase (340 aa).

The FAD-binding PCMH-type domain occupies 14-185 (HVEATARWLL…VAVEFNLPLL (172 aa)). The active site involves R162. The Proton donor role is filled by S235. The active site involves E332.

The protein belongs to the MurB family. The cofactor is FAD.

The protein localises to the cytoplasm. It carries out the reaction UDP-N-acetyl-alpha-D-muramate + NADP(+) = UDP-N-acetyl-3-O-(1-carboxyvinyl)-alpha-D-glucosamine + NADPH + H(+). It participates in cell wall biogenesis; peptidoglycan biosynthesis. Cell wall formation. This Xanthomonas oryzae pv. oryzae (strain KACC10331 / KXO85) protein is UDP-N-acetylenolpyruvoylglucosamine reductase.